The sequence spans 162 residues: RNA pyrophosphohydrolase (162 aa).

The Nudix hydrolase domain maps to 7-149; sequence KYRPCVGIML…KKEVYKTVIE (143 aa). Positions 40–61 match the Nudix box motif; it reads GGVDDGEELEQAALRELLEEVG.

The protein belongs to the Nudix hydrolase family. RppH subfamily. A divalent metal cation serves as cofactor.

Accelerates the degradation of transcripts by removing pyrophosphate from the 5'-end of triphosphorylated RNA, leading to a more labile monophosphorylated state that can stimulate subsequent ribonuclease cleavage. In Wolbachia sp. subsp. Drosophila simulans (strain wRi), this protein is RNA pyrophosphohydrolase.